The sequence spans 222 residues: Matrix protein (222 aa).

Positions 46–49 match the PTAP/PSAP motif motif; sequence PTAP.

In terms of assembly, homomultimer. Interacts with viral nucleocapsid. Interacts with host TSG101.

Its subcellular location is the virion membrane. It is found in the host endomembrane system. It localises to the host nucleus membrane. In terms of biological role, plays a major role in assembly and budding of virion, by recruiting cellular partners of the ESCRT complexes that play a key role in releasing the budding particle from the host membrane. Condensates the ribonucleocapsid core during virus assembly. This chain is Matrix protein (M), found in Drosophila melanogaster (Fruit fly).